Here is a 282-residue protein sequence, read N- to C-terminus: Phosphatidylserine decarboxylase proenzyme (282 aa).

Residues aspartate 85, histidine 142, and serine 244 each act as charge relay system; for autoendoproteolytic cleavage activity in the active site. Serine 244 serves as the catalytic Schiff-base intermediate with substrate; via pyruvic acid; for decarboxylase activity. A Pyruvic acid (Ser); by autocatalysis modification is found at serine 244.

Belongs to the phosphatidylserine decarboxylase family. PSD-B subfamily. Prokaryotic type I sub-subfamily. In terms of assembly, heterodimer of a large membrane-associated beta subunit and a small pyruvoyl-containing alpha subunit. The cofactor is pyruvate. In terms of processing, is synthesized initially as an inactive proenzyme. Formation of the active enzyme involves a self-maturation process in which the active site pyruvoyl group is generated from an internal serine residue via an autocatalytic post-translational modification. Two non-identical subunits are generated from the proenzyme in this reaction, and the pyruvate is formed at the N-terminus of the alpha chain, which is derived from the carboxyl end of the proenzyme. The autoendoproteolytic cleavage occurs by a canonical serine protease mechanism, in which the side chain hydroxyl group of the serine supplies its oxygen atom to form the C-terminus of the beta chain, while the remainder of the serine residue undergoes an oxidative deamination to produce ammonia and the pyruvoyl prosthetic group on the alpha chain. During this reaction, the Ser that is part of the protease active site of the proenzyme becomes the pyruvoyl prosthetic group, which constitutes an essential element of the active site of the mature decarboxylase.

The protein resides in the cell membrane. It carries out the reaction a 1,2-diacyl-sn-glycero-3-phospho-L-serine + H(+) = a 1,2-diacyl-sn-glycero-3-phosphoethanolamine + CO2. Its pathway is phospholipid metabolism; phosphatidylethanolamine biosynthesis; phosphatidylethanolamine from CDP-diacylglycerol: step 2/2. In terms of biological role, catalyzes the formation of phosphatidylethanolamine (PtdEtn) from phosphatidylserine (PtdSer). The polypeptide is Phosphatidylserine decarboxylase proenzyme (Coxiella burnetii (strain CbuG_Q212) (Coxiella burnetii (strain Q212))).